Reading from the N-terminus, the 137-residue chain is Photosystem II reaction center W protein, chloroplastic (137 aa).

Residues 1-64 constitute a chloroplast transit peptide; the sequence is MATITASSSA…ETTTTTNKSM (64 aa). The N-terminal 19 residues, 65 to 83, are a transit peptide targeting the thylakoid; sequence GASLLAAAAAATISNPAMA. Topologically, residues 84 to 103 are lumenal, thylakoid; sequence LVDERMSTEGTGLPFGLSNN. A helical transmembrane segment spans residues 104-123; the sequence is LLGWILFGVFGLIWALYFVY. Residues 124 to 137 lie on the Stromal side of the membrane; the sequence is ASGLEEDEESGLSL.

Part of the photosystem II complex. PSII is composed of 1 copy each of membrane proteins PsbA, PsbB, PsbC, PsbD, numerous small proteins, at least 3 peripheral proteins of the oxygen-evolving complex and a large number of cofactors. It forms dimeric complexes.

The protein resides in the plastid. Its subcellular location is the chloroplast thylakoid membrane. In terms of biological role, stabilizes dimeric photosystem II (PSII). In its absence no dimeric PSII accumulates and there is a reduction of monomeric PSII. This chain is Photosystem II reaction center W protein, chloroplastic, found in Spinacia oleracea (Spinach).